The sequence spans 599 residues: Putative ATP-dependent helicase YeeB (599 aa).

A Helicase ATP-binding domain is found at 30–207 (AFEKRNSQYL…LLPEDEELFD (178 aa)). Residue 43-50 (APPASGKS) participates in ATP binding. The short motif at 154-157 (DEFH) is the DEAH box element. One can recognise a Helicase C-terminal domain in the interval 236-408 (QYTSAINEVL…TVNTMLKAIS (173 aa)).

This sequence belongs to the helicase family.

This chain is Putative ATP-dependent helicase YeeB (yeeB), found in Bacillus subtilis (strain 168).